A 245-amino-acid polypeptide reads, in one-letter code: 3-deoxy-manno-octulosonate cytidylyltransferase (245 aa).

Belongs to the KdsB family.

The protein localises to the cytoplasm. The enzyme catalyses 3-deoxy-alpha-D-manno-oct-2-ulosonate + CTP = CMP-3-deoxy-beta-D-manno-octulosonate + diphosphate. It functions in the pathway nucleotide-sugar biosynthesis; CMP-3-deoxy-D-manno-octulosonate biosynthesis; CMP-3-deoxy-D-manno-octulosonate from 3-deoxy-D-manno-octulosonate and CTP: step 1/1. The protein operates within bacterial outer membrane biogenesis; lipopolysaccharide biosynthesis. Functionally, activates KDO (a required 8-carbon sugar) for incorporation into bacterial lipopolysaccharide in Gram-negative bacteria. The sequence is that of 3-deoxy-manno-octulosonate cytidylyltransferase from Acidobacterium capsulatum (strain ATCC 51196 / DSM 11244 / BCRC 80197 / JCM 7670 / NBRC 15755 / NCIMB 13165 / 161).